The chain runs to 659 residues: Interferon-induced GTP-binding protein Mx3 (659 aa).

The region spanning D65–P338 is the Dynamin-type G domain. Positions G75–S82 are G1 motif. G75–S82 is a binding site for GTP. Residues V100–R102 are G2 motif. Residues D176–G179 form a G3 motif region. GTP contacts are provided by residues D176–I180 and T245–D248. Positions T245–D248 are G4 motif. The segment at K277 to G280 is G5 motif. The tract at residues E547–T568 is disordered. The span at R559–T568 shows a compositional bias: polar residues. Positions M571–G659 constitute a GED domain.

This sequence belongs to the TRAFAC class dynamin-like GTPase superfamily. Dynamin/Fzo/YdjA family.

It localises to the cytoplasm. In terms of biological role, does not show activity against influenza virus or VSV; although it only differs from Mx2 by 8 positions. The sequence is that of Interferon-induced GTP-binding protein Mx3 (Mx3) from Rattus norvegicus (Rat).